We begin with the raw amino-acid sequence, 128 residues long: Sulfurtransferase TusD (128 aa).

Cys-78 functions as the Cysteine persulfide intermediate in the catalytic mechanism.

This sequence belongs to the DsrE/TusD family. Heterohexamer, formed by a dimer of trimers. The hexameric TusBCD complex contains 2 copies each of TusB, TusC and TusD. The TusBCD complex interacts with TusE.

It is found in the cytoplasm. In terms of biological role, part of a sulfur-relay system required for 2-thiolation of 5-methylaminomethyl-2-thiouridine (mnm(5)s(2)U) at tRNA wobble positions. Accepts sulfur from TusA and transfers it in turn to TusE. This Klebsiella pneumoniae subsp. pneumoniae (strain ATCC 700721 / MGH 78578) protein is Sulfurtransferase TusD.